The chain runs to 225 residues: Small ribosomal subunit protein uS3 (225 aa).

The region spanning 18 to 87 (VDEYLAKQFY…NPQITVTSVE (70 aa)) is the KH type-2 domain.

The protein belongs to the universal ribosomal protein uS3 family. As to quaternary structure, part of the 30S ribosomal subunit.

Binds the lower part of the 30S subunit head. The chain is Small ribosomal subunit protein uS3 from Sulfurisphaera tokodaii (strain DSM 16993 / JCM 10545 / NBRC 100140 / 7) (Sulfolobus tokodaii).